The primary structure comprises 317 residues: ADP-L-glycero-D-manno-heptose-6-epimerase (317 aa).

NADP(+) is bound by residues 10 to 11 (FI), 31 to 32 (DD), K38, K53, 75 to 79 (QGACS), and N92. Y139 acts as the Proton acceptor in catalysis. K143 provides a ligand contact to NADP(+). N166 serves as a coordination point for substrate. NADP(+) contacts are provided by V167 and K175. The active-site Proton acceptor is K175. Substrate is bound by residues G177, H184, 198-201 (FEGV), R211, and Y275.

Belongs to the NAD(P)-dependent epimerase/dehydratase family. HldD subfamily. In terms of assembly, homopentamer. NADP(+) is required as a cofactor.

It carries out the reaction ADP-D-glycero-beta-D-manno-heptose = ADP-L-glycero-beta-D-manno-heptose. It functions in the pathway nucleotide-sugar biosynthesis; ADP-L-glycero-beta-D-manno-heptose biosynthesis; ADP-L-glycero-beta-D-manno-heptose from D-glycero-beta-D-manno-heptose 7-phosphate: step 4/4. Its function is as follows. Catalyzes the interconversion between ADP-D-glycero-beta-D-manno-heptose and ADP-L-glycero-beta-D-manno-heptose via an epimerization at carbon 6 of the heptose. This is ADP-L-glycero-D-manno-heptose-6-epimerase from Shewanella piezotolerans (strain WP3 / JCM 13877).